A 1732-amino-acid chain; its full sequence is Transient receptor potential cation channel subfamily M member 3 (1732 aa).

Over 1 to 894 (MPGPWGTVYF…RKIYEFYNAP (894 aa)) the chain is Cytoplasmic. 5 calmodulin-binding regions span residues 41–64 (WTIR…QKSW), 192–215 (NFEL…MTTG), 300–323 (TGKY…QKIN), 601–624 (RKRF…KLLG), and 793–816 (RKNS…LEFK). The interval 617 to 625 (PKALKLLGM) is required for the inhibitory action of G-beta/gamma-subunits of heterotrimeric G-proteins. Ser796 is a binding site for 1,2-dioctanoyl-sn-glycero-3-phospho-(1D-myo-inositol-4,5-bisphosphate). Residues 829–851 (EIHLQEKEPEEPEKPTKEKDEED) form a disordered region. Residues 831 to 847 (HLQEKEPEEPEKPTKEK) show a composition bias toward basic and acidic residues. A helical membrane pass occupies residues 895-918 (IVKFWFYTLAYIGYLMLFNYIVLV). Residues 919 to 925 (KMERWPS) lie on the Extracellular side of the membrane. The chain crosses the membrane as a helical span at residues 926 to 948 (TQEWIVISYIFTLGIEKMREILM). Residues 949–964 (SEPGKLLQKVKVWLQE) lie on the Cytoplasmic side of the membrane. Residues 965 to 985 (YWNVTDLIAILLFSVGMILRL) form a helical membrane-spanning segment. Residues 986 to 989 (QDQP) are Extracellular-facing. Residues 990 to 1013 (FRSDGRVIYCVNIIYWYIRLLDIF) form a helical membrane-spanning segment. The Cytoplasmic portion of the chain corresponds to 1014-1028 (GVNKYLGPYVMMIGK). 1,2-dioctanoyl-sn-glycero-3-phospho-(1D-myo-inositol-4,5-bisphosphate) contacts are provided by Lys1017 and Tyr1018. A helical transmembrane segment spans residues 1029 to 1056 (MMIDMMYFVIIMLVVLMSFGVARQAILF). Residues 1057–1073 (PNEEPSWKLAKNIFYMP) lie on the Extracellular side of the membrane. The segment at residues 1074–1101 (YWMIYGEVFADQIDPPCGQNETREDGKT) is an intramembrane region (pore-forming). The Extracellular segment spans residues 1102 to 1111 (IQLPPCKTGA). Residues 1112–1137 (WIVPAIMACYLLVANILLVNLLIAVF) traverse the membrane as a helical segment. Topologically, residues 1138-1732 (NNTFFEVKSI…AFHSFESKHN (595 aa)) are cytoplasmic. The tract at residues 1610–1732 (EREAELSHPS…AFHSFESKHN (123 aa)) is disordered. 2 stretches are compositionally biased toward polar residues: residues 1635-1653 (PISS…NNIT) and 1690-1701 (NTASLRNPFQRS).

The protein belongs to the transient receptor (TC 1.A.4) family. LTrpC subfamily. TRPM3 sub-subfamily. As to quaternary structure, homotetramer. Interacts with TRPM1; the interaction results in the formation of a heteromultimeric cation channel complex that are functionally different from the homomeric channels.

Its subcellular location is the cell membrane. The enzyme catalyses Ca(2+)(in) = Ca(2+)(out). The catalysed reaction is Mn(2+)(in) = Mn(2+)(out). It catalyses the reaction Zn(2+)(in) = Zn(2+)(out). It carries out the reaction Mg(2+)(in) = Mg(2+)(out). The enzyme catalyses Na(+)(in) = Na(+)(out). With respect to regulation, activated by the neurosteroid pregnelonone sulfate (PregS). PregS activates the channel by shifting its current-voltage activation curve toward more negative membrane potentials and also potentiates temperature-induced activation. Activated by heat. Intracellular Ca(2+) inhibits TRPM3 probably via interaction with Ca(2+)/calmodulin. Intracellular Mg(2+) inhibits TRPM3 activity. Both intracellular and extracellular protons block TRPM3 through propable binding sites in the pore region. Positively regulated by phosphoinositide phosphoinositol 4,5-biphosphate (PI(4,5)P2). Strongly inhibited by activation of G(i)-coupled receptors via direct binding with G-beta/gamma-subunits of heterotrimeric G-proteins. Insensitive to pregnenolone sulfate (PregS) or heat. Its activity is regulated as follows. Not inhibited by G-beta/gamma-subunits of heterotrimeric G-proteins. Functionally, constitutively active, non-selective divalent cation-conducting channel that is permeable to Ca(2+), Mn(2+), and Mg(2+), with a high permeability for Ca(2+). However, can be enhanced by increasing temperature and by ligands, including the endogenous neurosteroid pregnenolone sulfate and sphingosine-1 and suppressed by intracellular Mg(2+). Implicated in a variety of cellular processes, including insulin/peptide secretion, vascular constriction and dilation, noxious heat sensing, inflammatory and spontaneous pain sensitivity. In neurons of the dorsal root ganglia, functions as thermosensitive channel for the detection of noxious heat and spontaneous pain. Suggested to function as an ionotropic steroid receptor in beta-cell, indeed pregnenolone sulfate leads to Ca(2+) influx and enhanced insulin secretion. Mediates Zn(2+) uptake into the lumen of pancreatic beta cell secretory granules, thereby regulating insulin secretion. Forms heteromultimeric ion channels with TRPM1 which are permeable for Ca(2+) and Zn(2+) ions. Exists as multiple splice variants which differ significantly in their biophysical properties. In terms of biological role, displays strongly reduced permeability for divalent cations and high selectivity toward monovalent cations. No channel activity. This is Transient receptor potential cation channel subfamily M member 3 from Mus musculus (Mouse).